We begin with the raw amino-acid sequence, 348 residues long: MO25-like protein At2g03410 (348 aa).

It belongs to the Mo25 family.

This chain is MO25-like protein At2g03410, found in Arabidopsis thaliana (Mouse-ear cress).